The sequence spans 512 residues: Kelch repeat protein C2 (512 aa).

The region spanning E2–V67 is the BTB domain. One can recognise a BACK domain in the interval C102 to N176. Kelch repeat units lie at residues I216–C261, L262–G307, L309–D354, I356–G403, I405–D449, and L452–S498.

The protein belongs to the poxviruses Kelch family.

The protein is Kelch repeat protein C2 of Camelus.